The primary structure comprises 217 residues: Thymidylate kinase (217 aa).

12–19 (GIDGSGKS) contributes to the ATP binding site.

The protein belongs to the thymidylate kinase family.

It carries out the reaction dTMP + ATP = dTDP + ADP. In terms of biological role, phosphorylation of dTMP to form dTDP in both de novo and salvage pathways of dTTP synthesis. This is Thymidylate kinase from Cereibacter sphaeroides (strain ATCC 17023 / DSM 158 / JCM 6121 / CCUG 31486 / LMG 2827 / NBRC 12203 / NCIMB 8253 / ATH 2.4.1.) (Rhodobacter sphaeroides).